The following is a 105-amino-acid chain: Urease subunit beta (105 aa).

The protein belongs to the urease beta subunit family. Heterotrimer of UreA (gamma), UreB (beta) and UreC (alpha) subunits. Three heterotrimers associate to form the active enzyme.

Its subcellular location is the cytoplasm. It carries out the reaction urea + 2 H2O + H(+) = hydrogencarbonate + 2 NH4(+). It functions in the pathway nitrogen metabolism; urea degradation; CO(2) and NH(3) from urea (urease route): step 1/1. This is Urease subunit beta from Mycobacterium sp. (strain JLS).